The primary structure comprises 75 residues: Protein BRICK1 (75 aa).

At Ala2 the chain carries N-acetylalanine. Residues 41 to 72 (MSCRSRLATLNEKLTALERRIEYIEARVTKGE) are a coiled coil.

This sequence belongs to the BRK1 family. Homotrimer when in free form. Directly interacts with WASF2. Component of the WAVE1 complex composed of ABI2, CYFIP1 or CYFIP2, BRK1, NCKAP1 and WASF1/WAVE1. Within the complex, a heterodimer containing NCKAP1 and CYFIP1 interacts with a heterotrimer formed by WAVE1, ABI2 and BRK1.

It localises to the cytoplasm. The protein resides in the cytoskeleton. Its function is as follows. Involved in regulation of actin and microtubule organization. Part of a WAVE complex that activates the Arp2/3 complex. As component of the WAVE1 complex, required for BDNF-NTRK2 endocytic trafficking and signaling from early endosomes. The sequence is that of Protein BRICK1 (BRK1) from Homo sapiens (Human).